Here is a 634-residue protein sequence, read N- to C-terminus: Glutamate--tRNA ligase (634 aa).

A 'HIGH' region motif is present at residues 108–118; sequence PNPSGPLHIGH.

Belongs to the class-I aminoacyl-tRNA synthetase family. Glutamate--tRNA ligase type 2 subfamily.

It is found in the cytoplasm. It carries out the reaction tRNA(Glu) + L-glutamate + ATP = L-glutamyl-tRNA(Glu) + AMP + diphosphate. Its function is as follows. Catalyzes the attachment of glutamate to tRNA(Glu) in a two-step reaction: glutamate is first activated by ATP to form Glu-AMP and then transferred to the acceptor end of tRNA(Glu). The chain is Glutamate--tRNA ligase from Methanoregula boonei (strain DSM 21154 / JCM 14090 / 6A8).